A 218-amino-acid chain; its full sequence is MKVYVLRIGHRPDRDKRITTHVGLVARAFGAHGFVLSPCDEKVLEKLRDVEERWGRLLEEIACTNSPLKYVKTWDGTVVHLTMYGLPVDSVIDEIRQKDKILVIVGAEKVPREYYELAHYNVAIGNQPHSEVAALAIFLDRLYGGAELYRQPVGGKLRIIPTEKGKKVVKVGEEGPSGGAPGVRAERGRGGRGEGVQGADEVRGHKRGATDRDLGDET.

Residues Leu-81, 106-110 (GAEKV), and 124-131 (IGNQPHSE) each bind S-adenosyl-L-methionine. Residues 170–218 (KVGEEGPSGGAPGVRAERGRGGRGEGVQGADEVRGHKRGATDRDLGDET) are disordered. Residues 200–218 (DEVRGHKRGATDRDLGDET) show a composition bias toward basic and acidic residues.

It belongs to the aTrm56 family. In terms of assembly, homodimer.

It is found in the cytoplasm. The catalysed reaction is cytidine(56) in tRNA + S-adenosyl-L-methionine = 2'-O-methylcytidine(56) in tRNA + S-adenosyl-L-homocysteine + H(+). Functionally, specifically catalyzes the AdoMet-dependent 2'-O-ribose methylation of cytidine at position 56 in tRNAs. This chain is tRNA (cytidine(56)-2'-O)-methyltransferase, found in Ignicoccus hospitalis (strain KIN4/I / DSM 18386 / JCM 14125).